An 883-amino-acid chain; its full sequence is DNA mismatch repair protein MutS (883 aa).

The segment at 1–25 (MSDSVAPDVPVIREGKNPAQHRDRT) is disordered. Basic and acidic residues predominate over residues 11–25 (VIREGKNPAQHRDRT). 664 to 671 (GPNASGKS) contacts ATP. A disordered region spans residues 857–883 (RKGNTQPRARKSSAETEAKTQQFELPF).

The protein belongs to the DNA mismatch repair MutS family.

Functionally, this protein is involved in the repair of mismatches in DNA. It is possible that it carries out the mismatch recognition step. This protein has a weak ATPase activity. In Acaryochloris marina (strain MBIC 11017), this protein is DNA mismatch repair protein MutS.